Consider the following 204-residue polypeptide: Flavin-dependent thymidylate synthase (204 aa).

Positions 1–204 constitute a ThyX domain; that stretch reads MTVTLMQHTS…RYLFCLNQEG (204 aa). FAD-binding positions include serine 50 and 74–76; that span reads RHR. Residues 71–74, 84–86, and lysine 143 each bind dUMP; these read ELAR and SSR. The ThyX motif signature appears at 74–84; that stretch reads RHRIASLSVKS. Residues 159 to 161 and asparagine 165 contribute to the FAD site; that span reads NAR. Position 170 (arginine 170) interacts with dUMP. Catalysis depends on arginine 170, which acts as the Involved in ionization of N3 of dUMP, leading to its activation.

Belongs to the thymidylate synthase ThyX family. Homotetramer. It depends on FAD as a cofactor.

It catalyses the reaction dUMP + (6R)-5,10-methylene-5,6,7,8-tetrahydrofolate + NADPH + H(+) = dTMP + (6S)-5,6,7,8-tetrahydrofolate + NADP(+). It functions in the pathway pyrimidine metabolism; dTTP biosynthesis. In terms of biological role, catalyzes the reductive methylation of 2'-deoxyuridine-5'-monophosphate (dUMP) to 2'-deoxythymidine-5'-monophosphate (dTMP) while utilizing 5,10-methylenetetrahydrofolate (mTHF) as the methyl donor, and NADPH and FADH(2) as the reductant. This Wolinella succinogenes (strain ATCC 29543 / DSM 1740 / CCUG 13145 / JCM 31913 / LMG 7466 / NCTC 11488 / FDC 602W) (Vibrio succinogenes) protein is Flavin-dependent thymidylate synthase.